The primary structure comprises 94 residues: Protein RESPONSE TO LOW SULFUR 1 (94 aa).

Residues 8–35 (VTVAAEEMDELRRRNIELSREVAEMKTE) are a coiled coil.

The sequence is that of Protein RESPONSE TO LOW SULFUR 1 from Arabidopsis thaliana (Mouse-ear cress).